Here is a 232-residue protein sequence, read N- to C-terminus: MSDPAVEVTPAVPVASPAKAKKEKKPKSDKPKKPKAPRTHLPVSDMVVNAVKTLKERGGSSVQAIKKFLVAQYKVDVDKLSPFIKKYLKSAVEKGQLLQTKGKGASGSFKLPAAAKKEKVVKKPKKVAEKKPKKAAAPKPKKAGEKKVKKTIAKKPKAATATKIKKPVAKTTKKPAAAKPAAKKAAPKPKAAPKPKAAKKETKPKKAAAPKAKKPAVEKKPKAAKKPAAKKA.

The span at 1–18 (MSDPAVEVTPAVPVASPA) shows a compositional bias: low complexity. Disordered stretches follow at residues 1 to 42 (MSDP…THLP) and 98 to 232 (LQTK…AKKA). In terms of domain architecture, H15 spans 39–113 (THLPVSDMVV…GASGSFKLPA (75 aa)). Basic residues-rich tracts occupy residues 131 to 141 (KPKKAAAPKPK), 147 to 173 (KVKK…KTTK), 181 to 214 (AAKK…KAKK), and 222 to 232 (KAAKKPAAKKA).

It belongs to the histone H1/H5 family.

The protein resides in the nucleus. Its subcellular location is the chromosome. Histones H1 are necessary for the condensation of nucleosome chains into higher-order structures. This is Histone H1A from Chironomus tentans (Midge).